Here is a 402-residue protein sequence, read N- to C-terminus: Phosphoglycerate kinase (402 aa).

Residues 21 to 23 (DFN), arginine 36, 59 to 62 (HLGR), arginine 118, and arginine 151 each bind substrate. ATP is bound by residues lysine 201, glycine 293, glutamate 324, and 353–356 (GGDS).

Belongs to the phosphoglycerate kinase family. As to quaternary structure, monomer.

Its subcellular location is the cytoplasm. It catalyses the reaction (2R)-3-phosphoglycerate + ATP = (2R)-3-phospho-glyceroyl phosphate + ADP. Its pathway is carbohydrate degradation; glycolysis; pyruvate from D-glyceraldehyde 3-phosphate: step 2/5. This chain is Phosphoglycerate kinase, found in Thermosipho africanus (strain TCF52B).